Reading from the N-terminus, the 138-residue chain is MATRTQARGAVVELLYAFESGNEEIKKIASSMLEEKKIKNNQLAFALSLFNGVLEKINEIDALIEPHLKDWDFKRLGSMEKAILRLGAYEIGFTPTQNPIIINECIELGKLYAEPNTPKFLNAILDSLSKKLAQKPLI.

Belongs to the NusB family.

Involved in transcription antitermination. Required for transcription of ribosomal RNA (rRNA) genes. Binds specifically to the boxA antiterminator sequence of the ribosomal RNA (rrn) operons. The chain is Transcription antitermination protein NusB from Helicobacter pylori (strain J99 / ATCC 700824) (Campylobacter pylori J99).